The chain runs to 1701 residues: Merozoite surface protein 1 (1701 aa).

The N-terminal stretch at 1–19 is a signal peptide; that stretch reads MKIIFFLCSFLFFIINTQC. The segment covering 89–100 has biased composition (gly residues); sequence GSGGSVASGGSG. The interval 89–118 is disordered; sequence GSGGSVASGGSGNSRRTNPSDNSSDSNTKT. The segment covering 101–116 has biased composition (low complexity); the sequence is NSRRTNPSDNSSDSNT. N-linked (GlcNAc...) asparagine glycosylation is found at N110 and N239. A disordered region spans residues 322–344; it reads DAENPTTGSKPNPLPENKKKEVE. N-linked (GlcNAc...) asparagine glycosylation is found at N470, N536, and N607. The segment at 704–739 is disordered; that stretch reads SETTEDGGHSTHTLSQSGETEVTEETEVTEETVGHT. Over residues 724–733 the composition is skewed to acidic residues; sequence EVTEETEVTE. N-linked (GlcNAc...) asparagine glycosylation is found at N802, N899, N919, N965, N991, N1089, and N1196. Low complexity predominate over residues 889–927; the sequence is TGTSSTSSPGNTTVNTAQSATHSNSQNQQSNASSTNTQN. The segment at 889 to 936 is disordered; sequence TGTSSTSSPGNTTVNTAQSATHSNSQNQQSNASSTNTQNGVAVSSGPA. Disordered regions lie at residues 1231–1259 and 1451–1472; these read PPQP…TQIP and KEKF…DEQK. The segment covering 1245–1259 has biased composition (polar residues); sequence VSGSSGSTKEETQIP. Pro residues predominate over residues 1456–1465; it reads SSPPTTPPSP. A glycan (N-linked (GlcNAc...) asparagine) is linked at N1588. EGF-like domains are found at residues 1592–1632 and 1633–1680; these read HQCV…VENP and NPTC…IFCS. 6 disulfide bridges follow: C1594–C1605, C1599–C1615, C1617–C1628, C1636–C1649, C1643–C1663, and C1665–C1679. Residue S1680 is the site of GPI-anchor amidated serine attachment. A propeptide spans 1681–1701 (removed in mature form); that stretch reads SSNFLGISFLLILMLILYSFI.

In terms of assembly, forms a complex composed of subunits p83, p30, p38, and p42 which remain non-covalently associated; the complex is formed at the merozoite surface prior to egress from host erythrocytes. Forms a complex composed of processed MSP1 subunits, MSP6 subunit p36 and MSP7; the complex is formed at the merozoite surface prior to egress from host erythrocytes. Within the complex, interacts (via subunit p38) with MSP6 subunit p36 and (via subunits p83, p30 and p38) with MSP7 (via subunit p22). Forms a complex composed of MSP1, MSP6, DBLMSP1 and DBLMSP2. Within the complex, interacts (via subunit p38) with DBLMSP1 and DBLMSP2. Forms a complex composed of MSP1, and rhoptry proteins RhopH3, RAP1 and CLAG9/RhopH3. Within the complex, interacts (via subunits p42 and p19) with RhopH3 (via C-terminus). Forms a complex composed of MSP1, MSP6, MSP7, MSP9 and MSP3; within the complex, MSP6 and MSP9 mediate the binding to the host erythrocyte. Interacts (via subunits p19 and p42) with MSP9; the interaction is direct; MSP1 subunits p19 or p42, and MSP9 form a co-ligand complex that interacts with host SLC4A1/Band 3 protein. May interact with PFD6. Interacts with host spectrin. Interacts with host glycophorin GYPA in a sialic acid-independent manner. As to quaternary structure, interacts with host proinflammatory cytokine S100P; the interaction blocks S100P inflammatory and chemotactic activities. In terms of assembly, interacts with host SLC4A1/Band 3 (via 5ABC region) on the host erythrocyte surface in a sialic acid-independent manner. Post-translationally, the p190 precursor is cleaved by SUB1 prior to merozoite egress into 4 subunits p83, p30, p38, and p42 which remain non-covalently associated. SUB1-mediated proteolytic cleavage occurs in an orderly manner; the first cleavage occurs at the p30/p38 site, followed by cleavage at the p83/p30 site, in the 3D7 strain a second cleavage occurs at the N-terminus of p83, the last cleavage occurs at the p38/p42 site. The order of cleavage is essential for parasite viability. SUB1-mediated processing is essential for merozoite egress. In a second processing step during erythrocyte invasion, p42 is cleaved by SUB2 into p33 and p19; the latter remains attached to the merozoite surface via its GPI-anchor and is endocytosed during the subsequent ring stage.

The protein resides in the cell membrane. It localises to the secreted. Its subcellular location is the vacuole membrane. In terms of biological role, during the asexual blood stage, involved in merozoite egress from host erythrocytes possibly via its interaction with the host cytoskeleton protein spectrin resulting in the destabilization of the host cytoskeleton and thus leading to erythrocyte cell membrane rupture. Involved in the binding to host erythrocytes and is required for host erythrocyte invasion. By binding to host proinflammatory cytokine S100P may interfere with host immune responses. Functionally, involved in merozoite invasion of host erythrocytes. May play a role in the biogenesis and/or function of the food vacuole during the intraerythrocytic development. This chain is Merozoite surface protein 1, found in Plasmodium falciparum (isolate FC27 / Papua New Guinea).